A 254-amino-acid chain; its full sequence is Short-chain dehydrogenase/reductase SDRA (254 aa).

15–39 is a binding site for NADP(+); sequence IVTASTQGIGFGITERFGLEGASVV. S146 is a substrate binding site. Y159 functions as the Proton acceptor in the catalytic mechanism. Residues 252–254 carry the Microbody targeting signal motif; sequence SRL.

Belongs to the short-chain dehydrogenases/reductases (SDR) family.

The protein localises to the peroxisome. Functionally, involved with IBR3 and IBR10 in the peroxisomal beta-oxidation of indole-3-butyric acid (IBA) to form indole-3-acetic acid (IAA), a biologically active auxin. May be responsible for catalyzing the dehydrogenation step in the conversion of IBA. May be involved in the peroxisomal activation of 2,4-dichlorophenoxybutyric acid (2,4-DB), a precursor of active auxins that inhibit root growth. The protein is Short-chain dehydrogenase/reductase SDRA of Arabidopsis thaliana (Mouse-ear cress).